Reading from the N-terminus, the 139-residue chain is Small ribosomal subunit protein bS6 (139 aa).

Positions 114–133 are enriched in basic and acidic residues; that stretch reads KKEPREPRAPREPRVEKVDE. The tract at residues 114–139 is disordered; the sequence is KKEPREPRAPREPRVEKVDEQTFTEE.

Belongs to the bacterial ribosomal protein bS6 family.

Binds together with bS18 to 16S ribosomal RNA. This chain is Small ribosomal subunit protein bS6, found in Campylobacter concisus (strain 13826).